A 23-amino-acid polypeptide reads, in one-letter code: Malate dehydrogenase (23 aa).

Asparagine 7 contributes to the NAD(+) binding site. Arginine 23 is a binding site for substrate.

This sequence belongs to the LDH/MDH superfamily. MDH type 1 family. Homodimer.

It catalyses the reaction (S)-malate + NAD(+) = oxaloacetate + NADH + H(+). This chain is Malate dehydrogenase, found in Pseudotsuga menziesii (Douglas-fir).